The sequence spans 63 residues: Small ribosomal subunit protein eS31 (63 aa).

Residues cysteine 31, cysteine 34, cysteine 50, and cysteine 53 each contribute to the Zn(2+) site. The segment at 31–53 adopts a C4-type zinc-finger fold; that stretch reads CPRCGSIMAHHMKPVERWACGKC.

Belongs to the eukaryotic ribosomal protein eS31 family. Part of the 30S ribosomal subunit. Zn(2+) is required as a cofactor.

This Sulfurisphaera tokodaii (strain DSM 16993 / JCM 10545 / NBRC 100140 / 7) (Sulfolobus tokodaii) protein is Small ribosomal subunit protein eS31.